Here is a 381-residue protein sequence, read N- to C-terminus: Succinyl-diaminopimelate desuccinylase (381 aa).

Residue His71 coordinates Zn(2+). Residue Asp73 is part of the active site. Asp104 is a Zn(2+) binding site. The active-site Proton acceptor is the Glu138. The Zn(2+) site is built by Glu139, Glu167, and His353.

This sequence belongs to the peptidase M20A family. DapE subfamily. As to quaternary structure, homodimer. The cofactor is Zn(2+). It depends on Co(2+) as a cofactor.

It catalyses the reaction N-succinyl-(2S,6S)-2,6-diaminopimelate + H2O = (2S,6S)-2,6-diaminopimelate + succinate. The protein operates within amino-acid biosynthesis; L-lysine biosynthesis via DAP pathway; LL-2,6-diaminopimelate from (S)-tetrahydrodipicolinate (succinylase route): step 3/3. In terms of biological role, catalyzes the hydrolysis of N-succinyl-L,L-diaminopimelic acid (SDAP), forming succinate and LL-2,6-diaminopimelate (DAP), an intermediate involved in the bacterial biosynthesis of lysine and meso-diaminopimelic acid, an essential component of bacterial cell walls. This Shewanella pealeana (strain ATCC 700345 / ANG-SQ1) protein is Succinyl-diaminopimelate desuccinylase.